The following is a 229-amino-acid chain: PKHD-type hydroxylase Rpal_3968 (229 aa).

In terms of domain architecture, Fe2OG dioxygenase spans 78–180 (QIFPPLFNRY…RVASFFWLQS (103 aa)). Fe cation-binding residues include His-98, Asp-100, and His-161. Position 171 (Arg-171) interacts with 2-oxoglutarate.

The cofactor is Fe(2+). L-ascorbate serves as cofactor.

This chain is PKHD-type hydroxylase Rpal_3968, found in Rhodopseudomonas palustris (strain TIE-1).